Here is a 555-residue protein sequence, read N- to C-terminus: Membrane protein insertase YidC (555 aa).

The chain crosses the membrane as a helical span at residues Ile-7–Gln-24. The interval Thr-61 to Thr-81 is disordered. The next 5 helical transmembrane spans lie at Gly-341–Leu-361, Trp-364–Ala-384, Leu-430–Leu-450, Leu-468–Gln-488, and Val-503–Val-523.

This sequence belongs to the OXA1/ALB3/YidC family. Type 1 subfamily. In terms of assembly, interacts with the Sec translocase complex via SecD. Specifically interacts with transmembrane segments of nascent integral membrane proteins during membrane integration.

The protein resides in the cell inner membrane. Its function is as follows. Required for the insertion and/or proper folding and/or complex formation of integral membrane proteins into the membrane. Involved in integration of membrane proteins that insert both dependently and independently of the Sec translocase complex, as well as at least some lipoproteins. Aids folding of multispanning membrane proteins. The sequence is that of Membrane protein insertase YidC from Cupriavidus pinatubonensis (strain JMP 134 / LMG 1197) (Cupriavidus necator (strain JMP 134)).